A 312-amino-acid chain; its full sequence is Protoheme IX farnesyltransferase (312 aa).

8 consecutive transmembrane segments (helical) span residues 12–32 (LALTKPRVIELLLVATIPAML), 41–61 (FGLILLTLIGGWMGAGAANTF), 93–113 (VFAWVLLIASVLWLGFLCHSW), 114–134 (LAAGFIVLTNWFYVFVYTKWL), 141–161 (NVIWGGAAGCMPVIVGWAVIT), 168–188 (FHAGWSSWLQAIILFMIIFFW), 240–260 (VPAASWIYLAAALISGGWFII), and 290–310 (ILFVALSVDAVLGWQTLAHAV).

This sequence belongs to the UbiA prenyltransferase family. Protoheme IX farnesyltransferase subfamily.

It localises to the cell membrane. The enzyme catalyses heme b + (2E,6E)-farnesyl diphosphate + H2O = Fe(II)-heme o + diphosphate. It participates in porphyrin-containing compound metabolism; heme O biosynthesis; heme O from protoheme: step 1/1. In terms of biological role, converts heme B (protoheme IX) to heme O by substitution of the vinyl group on carbon 2 of heme B porphyrin ring with a hydroxyethyl farnesyl side group. The protein is Protoheme IX farnesyltransferase of Corynebacterium jeikeium (strain K411).